An 897-amino-acid chain; its full sequence is Interference hedgehog (897 aa).

The first 26 residues, 1–26 (MSVTRGHKSTPSLLLLFLSVLTSLLA), serve as a signal peptide directing secretion. Topologically, residues 27–702 (AIPVLQANAP…THNETFNMNP (676 aa)) are extracellular. Ig-like C2-type domains are found at residues 40–147 (PGVR…ATIS), 148–235 (GDKI…RRLE), 244–336 (PSAA…YIQL), and 342–429 (PRIV…LQVN). Disulfide bonds link Cys-63–Cys-125, Cys-169–Cys-217, and Cys-272–Cys-320. Residues Asn-96 and Asn-99 are each glycosylated (N-linked (GlcNAc...) asparagine). Residues Asn-296, Asn-351, Asn-393, and Asn-467 are each glycosylated (N-linked (GlcNAc...) asparagine). A disulfide bridge connects residues Cys-363 and Cys-411. Positions 434-468 (QAGDGMGTGGMGRSSNRNAHNRKQKQMVPPSAPNV) are disordered. Fibronectin type-III domains follow at residues 462-571 (PPSA…LQRG) and 579-674 (VPEL…TQRP). Residues Arg-498, Lys-504, and Lys-506 each coordinate heparin. The N-linked (GlcNAc...) asparagine glycan is linked to Asn-530. Arg-545 is a heparin binding site. N-linked (GlcNAc...) asparagine glycosylation occurs at Asn-561. Polar residues predominate over residues 666-682 (LKQGRTQRPRSSTTAQP). Residues 666–694 (LKQGRTQRPRSSTTAQPTMHTVDTTTPTH) are disordered. Low complexity predominate over residues 683-694 (TMHTVDTTTPTH). A glycan (N-linked (GlcNAc...) asparagine) is linked at Asn-695. Residues 703-723 (LLTGTISGGALLILLVISACL) form a helical membrane-spanning segment. The Cytoplasmic portion of the chain corresponds to 724–897 (CLCKRRHSRG…SSGSLNSVGV (174 aa)). Disordered regions lie at residues 773–793 (AQQQ…DSQD) and 819–849 (MSSS…NLNQ). A compositionally biased stretch (low complexity) spans 774-784 (QQQQQQLQQQH).

It belongs to the immunoglobulin superfamily. IHOG family. Homodimer. Heterotetramer; 2 iHog chains bind 2 hh chains when facilitated by heparin, heparin is required to promote high-affinity interactions between hh and iHog.

The protein resides in the membrane. In terms of biological role, mediates response to the active Hedgehog (Hh) protein signal in embryos, functioning upstream or at the level of patched (ptc). The polypeptide is Interference hedgehog (Drosophila mojavensis (Fruit fly)).